The sequence spans 329 residues: Secretory carrier-associated membrane protein 2 (329 aa).

Positions 1–74 (MSAFDTNPFA…PSVEPAQPTP (74 aa)) are disordered. At 1–153 (MSAFDTNPFA…DYQRICKMLY (153 aa)) the chain is on the cytoplasmic side. Composition is skewed to polar residues over residues 19 to 31 (QDPS…NAPQ) and 40 to 51 (FSETNAATTVPA). The chain crosses the membrane as a helical span at residues 154–174 (YLWMLHSVTLFLNLLACLAWF). At 175–181 (TSDAANG) the chain is on the lumenal side. Residues 182-202 (TAFGLSILWFLIFTPCAFLCW) traverse the membrane as a helical segment. The Cytoplasmic portion of the chain corresponds to 203 to 218 (YRPIYKAFRSDNSFSF). The tract at residues 203 to 218 (YRPIYKAFRSDNSFSF) is interaction with SLC9A7. Residues 219–239 (FVFFFVFFCQIGIYFIQLIGL) traverse the membrane as a helical segment. The Lumenal segment spans residues 240 to 262 (PNLGTSGWLAALSTMKNGPLAVT). The chain crosses the membrane as a helical span at residues 263–283 (IIMMVVAGFFTLCAGLSLFLL). The Cytoplasmic portion of the chain corresponds to 284–329 (QRVHAFYRRTGASFQQAQEEFSQGIFSSRTFRGAASSAARGAFQGN). 2 positions are modified to phosphoserine: serine 319 and serine 320.

It belongs to the SCAMP family. Interacts with SLC6A4 and SLC9A7. Interacts with SLC9A5; this interaction regulates SLC9A5 cell-surface targeting and SLC9A5 activity.

Its subcellular location is the golgi apparatus. It is found in the trans-Golgi network membrane. The protein localises to the recycling endosome membrane. Functions in post-Golgi recycling pathways. Acts as a recycling carrier to the cell surface. The sequence is that of Secretory carrier-associated membrane protein 2 (Scamp2) from Mus musculus (Mouse).